A 53-amino-acid polypeptide reads, in one-letter code: Small, acid-soluble spore protein K (53 aa).

The disordered stretch occupies residues M1–F53. Basic and acidic residues-rich tracts occupy residues F16 to S28 and P39 to F53.

The protein belongs to the SspK family.

The protein localises to the spore core. This is Small, acid-soluble spore protein K from Geobacillus sp. (strain WCH70).